The following is a 353-amino-acid chain: MGCCSSDCFVYFILSIALAFMAISTTLRSPPDSEPTIPIAFSSSSPSLSLNASNTLRQSNFKAIATLLHISPEIFLSSSPNTTLFAIEDASFFNTSSLHPLFLKQLLHYHTLPLMLSMDDLLKKPQGTCLPTLLHHKSVQISTVNQESRTAEVNHVRITHPDMFLGDSLVIHGVIGPFSPLQPHSDHLIHTPLCQSDTTNKTSNNEEVPVSIDWTRIVQLLSSNGFVPFAIGLHSVLNRIVNDHNHHKNLTGVTILATPNLVSLSSASPFLYEVVRHHILVQRLTYKDFASMSDKATVKTLDPYQDLTITRRNVNSSGGDFMISGVEIVDPDMFSSSNFVIHGISHTLEIPHV.

The signal sequence occupies residues 1 to 28 (MGCCSSDCFVYFILSIALAFMAISTTLR). N-linked (GlcNAc...) asparagine glycans are attached at residues N51, N81, N94, N200, N249, and N315. The FAS1 1 domain occupies 83–181 (TLFAIEDASF…HGVIGPFSPL (99 aa)). The FAS1 2 domain maps to 254–352 (TILATPNLVS…GISHTLEIPH (99 aa)).

Belongs to the fasciclin-like AGP family.

It is found in the secreted. Its function is as follows. May be a cell surface adhesion protein. This is Fasciclin-like arabinogalactan protein 21 (FLA21) from Arabidopsis thaliana (Mouse-ear cress).